Here is a 57-residue protein sequence, read N- to C-terminus: UPF0057 membrane protein T23F2.4 (57 aa).

The next 2 helical transmembrane spans lie at 3–23 and 36–56; these read ITCM…VGVF and ILLT…IILA.

The protein belongs to the UPF0057 (PMP3) family.

The protein resides in the membrane. The sequence is that of UPF0057 membrane protein T23F2.4 from Caenorhabditis elegans.